A 339-amino-acid chain; its full sequence is Phosphate acyltransferase (339 aa).

This sequence belongs to the PlsX family. Homodimer. Probably interacts with PlsY.

It is found in the cytoplasm. It catalyses the reaction a fatty acyl-[ACP] + phosphate = an acyl phosphate + holo-[ACP]. Its pathway is lipid metabolism; phospholipid metabolism. Its function is as follows. Catalyzes the reversible formation of acyl-phosphate (acyl-PO(4)) from acyl-[acyl-carrier-protein] (acyl-ACP). This enzyme utilizes acyl-ACP as fatty acyl donor, but not acyl-CoA. The protein is Phosphate acyltransferase of Ruthia magnifica subsp. Calyptogena magnifica.